The sequence spans 136 residues: uncharacterized protein (136 aa).

Residues 74–97 (RADPGRKGRTQPLPTQGSARRFLH) form a disordered region.

This is an uncharacterized protein from Saccharomyces cerevisiae (strain ATCC 204508 / S288c) (Baker's yeast).